The chain runs to 301 residues: Phosphatidylglycerol--prolipoprotein diacylglyceryl transferase (301 aa).

Transmembrane regions (helical) follow at residues 17–37 (LAVRWYGLMYLVAFIAAIVVG), 59–79 (MLFYGVLGTILGGRLGYVLFY), and 97–117 (GGMSFHGGFLGVTLAMVLFAY). R142 provides a ligand contact to a 1,2-diacyl-sn-glycero-3-phospho-(1'-sn-glycerol). The next 2 membrane-spanning stretches (helical) occupy residues 230–250 (MGAISAVFLIGYGLARFTVEF) and 265–285 (LSMGQWLSLPMILVGIGLLVW).

It belongs to the Lgt family.

The protein resides in the cell inner membrane. It catalyses the reaction L-cysteinyl-[prolipoprotein] + a 1,2-diacyl-sn-glycero-3-phospho-(1'-sn-glycerol) = an S-1,2-diacyl-sn-glyceryl-L-cysteinyl-[prolipoprotein] + sn-glycerol 1-phosphate + H(+). It participates in protein modification; lipoprotein biosynthesis (diacylglyceryl transfer). Its function is as follows. Catalyzes the transfer of the diacylglyceryl group from phosphatidylglycerol to the sulfhydryl group of the N-terminal cysteine of a prolipoprotein, the first step in the formation of mature lipoproteins. The protein is Phosphatidylglycerol--prolipoprotein diacylglyceryl transferase of Paraburkholderia phytofirmans (strain DSM 17436 / LMG 22146 / PsJN) (Burkholderia phytofirmans).